A 179-amino-acid polypeptide reads, in one-letter code: Large ribosomal subunit protein uL5 (179 aa).

The protein belongs to the universal ribosomal protein uL5 family. As to quaternary structure, part of the 50S ribosomal subunit; part of the 5S rRNA/L5/L18/L25 subcomplex. Contacts the 5S rRNA and the P site tRNA. Forms a bridge to the 30S subunit in the 70S ribosome.

In terms of biological role, this is one of the proteins that bind and probably mediate the attachment of the 5S RNA into the large ribosomal subunit, where it forms part of the central protuberance. In the 70S ribosome it contacts protein S13 of the 30S subunit (bridge B1b), connecting the 2 subunits; this bridge is implicated in subunit movement. Contacts the P site tRNA; the 5S rRNA and some of its associated proteins might help stabilize positioning of ribosome-bound tRNAs. The chain is Large ribosomal subunit protein uL5 from Pelobacter propionicus (strain DSM 2379 / NBRC 103807 / OttBd1).